The chain runs to 373 residues: Probable peptidoglycan glycosyltransferase FtsW (373 aa).

A run of 9 helical transmembrane segments spans residues 15–35 (LVIL…VYSA), 48–68 (FYFL…MAVA), 80–100 (AVPI…PGIG), 144–164 (FFST…LILL), 168–188 (DLGA…AAGT), 192–212 (YIIA…MNVD), 278–298 (LGLI…LRGV), 311–331 (FLAF…MAVV), and 342–362 (LPFI…VGIL).

Belongs to the SEDS family. FtsW subfamily.

The protein resides in the cell inner membrane. It catalyses the reaction [GlcNAc-(1-&gt;4)-Mur2Ac(oyl-L-Ala-gamma-D-Glu-L-Lys-D-Ala-D-Ala)](n)-di-trans,octa-cis-undecaprenyl diphosphate + beta-D-GlcNAc-(1-&gt;4)-Mur2Ac(oyl-L-Ala-gamma-D-Glu-L-Lys-D-Ala-D-Ala)-di-trans,octa-cis-undecaprenyl diphosphate = [GlcNAc-(1-&gt;4)-Mur2Ac(oyl-L-Ala-gamma-D-Glu-L-Lys-D-Ala-D-Ala)](n+1)-di-trans,octa-cis-undecaprenyl diphosphate + di-trans,octa-cis-undecaprenyl diphosphate + H(+). The protein operates within cell wall biogenesis; peptidoglycan biosynthesis. In terms of biological role, peptidoglycan polymerase that is essential for cell division. This is Probable peptidoglycan glycosyltransferase FtsW from Geobacter sulfurreducens (strain DL-1 / KN400).